The following is a 157-amino-acid chain: Protein-export protein SecB (157 aa).

Belongs to the SecB family. In terms of assembly, homotetramer, a dimer of dimers. One homotetramer interacts with 1 SecA dimer.

The protein resides in the cytoplasm. Its function is as follows. One of the proteins required for the normal export of preproteins out of the cell cytoplasm. It is a molecular chaperone that binds to a subset of precursor proteins, maintaining them in a translocation-competent state. It also specifically binds to its receptor SecA. This chain is Protein-export protein SecB, found in Dichelobacter nodosus (strain VCS1703A).